Reading from the N-terminus, the 362-residue chain is Homeobox protein Nkx-2.3 (362 aa).

2 disordered regions span residues 126–149 (EAAG…RKPR) and 203–222 (QRQD…PPRR). Basic and acidic residues predominate over residues 132–141 (KTSEDGERPK). A DNA-binding region (homeobox) is located at residues 145 to 204 (RRKPRVLFSQAQVFELERRFKQQRYLSAPEREHLASSLKLTSTQVKIWFQNRRYKCKRQR).

Belongs to the NK-2 homeobox family. Expressed in spleen and intestine. Also expressed in salivary gland and tongue.

It localises to the nucleus. Its function is as follows. Transcriptional regulator essential for normal development and functions of the small intestine and spleen. Activates directly MADCAM1 expression. Required for homing of lymphocytes in spleen and mucosa-associated lymphoid tissue. May have a role during pharyngeal organogenesis. This Mus musculus (Mouse) protein is Homeobox protein Nkx-2.3 (Nkx2-3).